The primary structure comprises 447 residues: MSLWLEAPVPDVSPDSAVELWEPDAQDASSQPLGSSKCILREESSTPQSAGDTSRMGLEAPEPTALLPGVEAPPESTELRPQKRKKGPAPKMLGNELCSVCGDKASGFHYNVLSCEGCKGFFRRSVIKGARYVCHSGGHCPMDTYMRRKCQECRLRKCRQAGMREECVLSEEQIRLKKMKRQEEEQAQATSAPPRASSPPQVLPQLSPEQLGMIEKLVAAQQLCNRRSFSDQLRVTPWPMAPDPQSREARQQRFAHFTELAIVSVQEIVDFAKQLPGFLQLSREDQIALLKTSAIEVMLLETSRRYNPGSESITFLKDFSYNREDFAKAGLQVEFINPIFEFSRAMNELQLNDAEFALLIAISIFSADRPNVQDQLQVERLQHTYVEALHAYVSIHHPHDRLMFPRMLMKLVSLRTLSSVHSEQVFALRLQDKKLPPLLSEIWDVHE.

The segment at 1–88 (MSLWLEAPVP…LRPQKRKKGP (88 aa)) is disordered. The tract at residues 1 to 96 (MSLWLEAPVP…GPAPKMLGNE (96 aa)) is transactivation AF-1; required for ligand-independent transactivation function. The nuclear receptor DNA-binding region spans 95-170 (NELCSVCGDK…AGMREECVLS (76 aa)). 2 consecutive NR C4-type zinc fingers follow at residues 98-118 (CSVCGDKASGFHYNVLSCEGC) and 134-158 (CHSGGHCPMDTYMRRKCQECRLRKC). The tract at residues 178-203 (KMKRQEEEQAQATSAPPRASSPPQVL) is disordered. Over residues 187-203 (AQATSAPPRASSPPQVL) the composition is skewed to low complexity. Residues 205–447 (QLSPEQLGMI…LLSEIWDVHE (243 aa)) form a transactivation AF-2; required for ligand-dependent transactivation function; mediates interaction with CCAR2 region. The NR LBD domain maps to 209–447 (EQLGMIEKLV…LLSEIWDVHE (239 aa)).

It belongs to the nuclear hormone receptor family. NR1 subfamily. Heterodimer of NR1H3 and RXR (retinoic acid receptor). Interacts with CCAR2 (via N-terminus) in a ligand-independent manner. Interacts with SIRT1 and this interaction is inhibited by CCAR2. Post-translationally, ubiquitinated by UBR5, leading to its degradation: UBR5 specifically recognizes and binds ligand-bound NR1H3 when it is not associated with coactivators (NCOAs). In presence of NCOAs, the UBR5-degron is not accessible, preventing its ubiquitination and degradation.

The protein localises to the nucleus. It localises to the cytoplasm. Nuclear receptor that exhibits a ligand-dependent transcriptional activation activity. Interaction with retinoic acid receptor (RXR) shifts RXR from its role as a silent DNA-binding partner to an active ligand-binding subunit in mediating retinoid responses through target genes defined by LXRES. LXRES are DR4-type response elements characterized by direct repeats of two similar hexanuclotide half-sites spaced by four nucleotides. Plays an important role in the regulation of cholesterol homeostasis, regulating cholesterol uptake through MYLIP-dependent ubiquitination of LDLR, VLDLR and LRP8. Interplays functionally with RORA for the regulation of genes involved in liver metabolism. Induces LPCAT3-dependent phospholipid remodeling in endoplasmic reticulum (ER) membranes of hepatocytes, driving SREBF1 processing and lipogenesis. Via LPCAT3, triggers the incorporation of arachidonate into phosphatidylcholines of ER membranes, increasing membrane dynamics and enabling triacylglycerols transfer to nascent very low-density lipoprotein (VLDL) particles. Via LPCAT3 also counteracts lipid-induced ER stress response and inflammation, likely by modulating SRC kinase membrane compartmentalization and limiting the synthesis of lipid inflammatory mediators. This Bos taurus (Bovine) protein is Oxysterols receptor LXR-alpha (NR1H3).